The chain runs to 66 residues: VVIVAVLLLTACQLITANDSRGTQKHRALRSDTKLSMSTRCKGKGASCRRTSYDCCTGSCRSGRCG.

Positions 1-17 are cleaved as a signal peptide; it reads VVIVAVLLLTACQLITA. Residues 18–40 constitute a propeptide that is removed on maturation; that stretch reads NDSRGTQKHRALRSDTKLSMSTR. 3 disulfides stabilise this stretch: Cys-41/Cys-56, Cys-48/Cys-60, and Cys-55/Cys-65. The residue at position 65 (Cys-65) is a Cysteine amide.

Belongs to the conotoxin O1 superfamily. Expressed by the venom duct.

It localises to the secreted. Its function is as follows. Omega-conotoxins act at presynaptic membranes, they bind and block voltage-gated calcium channels. This toxin blocks N-type calcium channels (Cav2.2/CACNA1B). It shows a higher potency when Cav2.2/CACNA1B is only expressed with the ancillary subunit CACNB3 (IC(50)=0.12 nM) than on Cav2.2/CACNA1B expressed with the ancillary subunits CACNA2D1 and CACNB3 (IC(50)=2.6 nM). The Cav2.2/CACNA1B block by this toxin is voltage-independent, whereas the recovery from toxin block is voltage-dependent. There is a low recovery at physiological membrane potential and a high recovery with hyperpolarized potential. This indicates that the toxin has a higher affinity for Cav2.2/CACNA1B in the inactivated state. It is noteworthy that ancillary subunits beta modulate recovery from this toxin block. Cav2.2/CACNA1B expressed with the ancillary subunit CACNB2a (isoform 2a) almost recover completely from this toxin block, whereas Cav2.2/CACNA1B expressed with CACNB3 exhibits relatively weak recovery. Inhibition by this toxin of excitatory synaptic transmission is reversible. In vivo, when tested on rat model of persistent pain, this toxin blocks chronic pain behavior. This is Omega conotoxin-CVIE from Conus catus (Cat cone).